The chain runs to 395 residues: Phosphoglycerate kinase (395 aa).

Residues 21–23 (DIN), Arg-36, 59–62 (HFGR), Arg-114, and Arg-147 contribute to the substrate site. Residues Lys-197, Glu-322, and 352–355 (GGDT) contribute to the ATP site.

The protein belongs to the phosphoglycerate kinase family. In terms of assembly, monomer.

Its subcellular location is the cytoplasm. It catalyses the reaction (2R)-3-phosphoglycerate + ATP = (2R)-3-phospho-glyceroyl phosphate + ADP. It participates in carbohydrate degradation; glycolysis; pyruvate from D-glyceraldehyde 3-phosphate: step 2/5. The polypeptide is Phosphoglycerate kinase (Roseobacter denitrificans (strain ATCC 33942 / OCh 114) (Erythrobacter sp. (strain OCh 114))).